The primary structure comprises 77 residues: Defensin-like protein 1 (77 aa).

A signal peptide spans methionine 1–alanine 30. 4 cysteine pairs are disulfide-bonded: cysteine 33-cysteine 77, cysteine 44-cysteine 64, cysteine 50-cysteine 71, and cysteine 54-cysteine 73.

The protein belongs to the DEFL family. As to expression, expressed in the whole plant except roots.

It is found in the secreted. In terms of biological role, confers broad-spectrum resistance to pathogens. The protein is Defensin-like protein 1 (PDF2.3) of Arabidopsis thaliana (Mouse-ear cress).